The chain runs to 237 residues: BTB/POZ domain-containing protein KCTD6 (237 aa).

Residues 1–104 (MDNGDWGYMM…FYQIEPLIQC (104 aa)) form an interaction with ANK1 isoform Mu7 region. The segment at 10 to 110 (MSDPVTLNVG…LIQCLNDPRP (101 aa)) is interaction with CUL3. In terms of domain architecture, BTB spans 12-81 (DPVTLNVGGH…LRTSELTLPL (70 aa)). An interaction with USP21 region spans residues 113–187 (PMDTFEEVVE…TFGPCDYHQE (75 aa)).

Homopentamer. Interacts with KCTD11; KCTD6 and KCTD11 may associate in heteropentameric assemblies. Interacts (via BTB domain) with CUL3; initially a 4:4 stoichiometry has been reported, however, electron microscopy revealed pentameric states with a five-pointed pinwheel shape. The interaction with CUL3 is indicative for a participation in a BCR (BTB-CUL3-RBX1) E3 ubiquitin-protein ligase complex. Interacts with HDAC1; probably indirect as the interaction requires the presence of KCTD11. Interacts with USP21 (preferentially catalytic inactive form). Interacts with ANK1 isoform Mu7; detected in striated muscle. Interacts with USP11. As to expression, highly expressed in cerebellum and brain.

The protein resides in the cytoplasm. Its subcellular location is the myofibril. The protein localises to the sarcomere. It localises to the m line. Its pathway is protein modification; protein ubiquitination. Functionally, probable substrate-specific adapter of a BCR (BTB-CUL3-RBX1) E3 ubiquitin-protein ligase complex mediating the ubiquitination and subsequent proteasomal degradation of target proteins. Promotes the ubiquitination of HDAC1; the function seems to depend on KCTD11:KCTD6 oligomerization. Can function as antagonist of the Hedgehog pathway by affecting the nuclear transfer of transcription factor GLI1; the function probably occurs via HDAC1 down-regulation, keeping GLI1 acetylated and inactive. Inhibits cell growth and tumorigenicity of medulloblastoma (MDB). Involved in regulating protein levels of ANK1 isoform Mu7 probably implicating CUL3-dependent proteasomal degradation. The chain is BTB/POZ domain-containing protein KCTD6 (Kctd6) from Mus musculus (Mouse).